The chain runs to 185 residues: MSELYKNIVLCQNGDKKAIEYIINRFEILINKYKMSFLKEIHFNSYDIEDNKQDLIVSLINIVNKIPIDNPQFENEGCLVNYIYKSILNSRKDMYINKNIKRYFIESQSLSSMVEFKDKPLVKYIESNIEIEDMLKCLTEKEQKVIKYKFLNDKSEVEIAEIMGTSRQWINRIKNTALKKLKENI.

Functionally, may have a role in bacteriocin secretion or immunity. The polypeptide is Bacteriocin UviA (uviA) (Clostridium perfringens).